Reading from the N-terminus, the 313-residue chain is ADP-L-glycero-D-manno-heptose-6-epimerase (313 aa).

NADP(+) is bound by residues 10–11 (FI), 31–32 (DD), arginine 38, lysine 53, 75–79 (EGACS), and asparagine 92. Tyrosine 139 (proton acceptor) is an active-site residue. An NADP(+)-binding site is contributed by lysine 143. Residue asparagine 168 coordinates substrate. Residues valine 169 and lysine 177 each coordinate NADP(+). Lysine 177 functions as the Proton acceptor in the catalytic mechanism. Residues lysine 179, histidine 186, 200-203 (FEGW), arginine 213, and tyrosine 277 contribute to the substrate site.

The protein belongs to the NAD(P)-dependent epimerase/dehydratase family. HldD subfamily. As to quaternary structure, homopentamer. NADP(+) serves as cofactor.

It catalyses the reaction ADP-D-glycero-beta-D-manno-heptose = ADP-L-glycero-beta-D-manno-heptose. Its pathway is nucleotide-sugar biosynthesis; ADP-L-glycero-beta-D-manno-heptose biosynthesis; ADP-L-glycero-beta-D-manno-heptose from D-glycero-beta-D-manno-heptose 7-phosphate: step 4/4. Functionally, catalyzes the interconversion between ADP-D-glycero-beta-D-manno-heptose and ADP-L-glycero-beta-D-manno-heptose via an epimerization at carbon 6 of the heptose. The sequence is that of ADP-L-glycero-D-manno-heptose-6-epimerase from Marinobacter nauticus (strain ATCC 700491 / DSM 11845 / VT8) (Marinobacter aquaeolei).